A 117-amino-acid chain; its full sequence is Large ribosomal subunit protein bL20c (117 aa).

It belongs to the bacterial ribosomal protein bL20 family.

It localises to the plastid. Its subcellular location is the chloroplast. Functionally, binds directly to 23S ribosomal RNA and is necessary for the in vitro assembly process of the 50S ribosomal subunit. It is not involved in the protein synthesizing functions of that subunit. This is Large ribosomal subunit protein bL20c from Buxus microphylla (Littleleaf boxwood).